A 475-amino-acid polypeptide reads, in one-letter code: Argininosuccinate lyase (475 aa).

This sequence belongs to the lyase 1 family. Argininosuccinate lyase subfamily.

The protein localises to the cytoplasm. It catalyses the reaction 2-(N(omega)-L-arginino)succinate = fumarate + L-arginine. Its pathway is amino-acid biosynthesis; L-arginine biosynthesis; L-arginine from L-ornithine and carbamoyl phosphate: step 3/3. This Streptomyces griseus subsp. griseus (strain JCM 4626 / CBS 651.72 / NBRC 13350 / KCC S-0626 / ISP 5235) protein is Argininosuccinate lyase.